Here is a 501-residue protein sequence, read N- to C-terminus: Alveolysin (501 aa).

Residues 1-32 form the signal peptide; sequence MKKKSNHLKGRKVLVSLLVSLQVFAFASISSA. A run of 4 beta stranded transmembrane segments spans residues 191-204, 211-220, 289-298, and 306-318; these read QNQISSALNVNAKV, IDFNAVANGE, SNDVQTAFKL, and QASGQYKDIYENS. Residues 460–470 carry the Conserved undecapeptide motif; it reads ECTGLAWEWWR. The Cholesterol binding signature appears at 492-493; the sequence is TL.

It belongs to the cholesterol-dependent cytolysin family. As to quaternary structure, homooligomeric pore complex of 35 to 50 subunits; when inserted in the host membrane.

It localises to the secreted. The protein localises to the host cell membrane. Its activity is regulated as follows. Inhibited by cholesterol and thiol reagents. A cholesterol-dependent toxin that causes cytolysis by forming pores in cholesterol containing host membranes. After binding to target membranes, the protein undergoes a major conformation change, leading to its insertion in the host membrane and formation of an oligomeric pore complex. Cholesterol is required for binding to host cell membranes, membrane insertion and pore formation; cholesterol binding is mediated by a Thr-Leu pair in the C-terminus. Can be reversibly inactivated by oxidation. The chain is Alveolysin (alv) from Paenibacillus alvei (Bacillus alvei).